Consider the following 343-residue polypeptide: Sulfate/thiosulfate import ATP-binding protein CysA (343 aa).

One can recognise an ABC transporter domain in the interval I3 to M233. ATP is bound at residue G35–S42.

It belongs to the ABC transporter superfamily. Sulfate/tungstate importer (TC 3.A.1.6) family.

The protein resides in the plastid. Its subcellular location is the chloroplast. It catalyses the reaction sulfate(out) + ATP + H2O = sulfate(in) + ADP + phosphate + H(+). It carries out the reaction thiosulfate(out) + ATP + H2O = thiosulfate(in) + ADP + phosphate + H(+). Functionally, part of the ABC transporter complex involved in sulfate/thiosulfate import. Responsible for energy coupling to the transport system. This is Sulfate/thiosulfate import ATP-binding protein CysA from Nephroselmis olivacea (Green alga).